Reading from the N-terminus, the 332-residue chain is Thiamine-binding periplasmic protein (332 aa).

The N-terminal stretch at 1 to 20 (MKLLKLTLISTALFSTAALA) is a signal peptide. Residues Trp-202 and 220 to 223 (YSTS) contribute to the thiamine site.

It belongs to the bacterial solute-binding protein 1 family. As to quaternary structure, the complex is composed of two ATP-binding proteins (ThiQ), two transmembrane proteins (ThiP) and a solute-binding protein (ThiB).

It localises to the periplasm. Part of the ABC transporter complex ThiBPQ involved in thiamine import. The sequence is that of Thiamine-binding periplasmic protein (thiB) from Haemophilus influenzae (strain ATCC 51907 / DSM 11121 / KW20 / Rd).